Reading from the N-terminus, the 137-residue chain is Large ribosomal subunit protein uL16 (137 aa).

This sequence belongs to the universal ribosomal protein uL16 family. In terms of assembly, part of the 50S ribosomal subunit.

Its function is as follows. Binds 23S rRNA and is also seen to make contacts with the A and possibly P site tRNAs. The protein is Large ribosomal subunit protein uL16 of Rhizobium rhizogenes (strain K84 / ATCC BAA-868) (Agrobacterium radiobacter).